The sequence spans 309 residues: Peptide methionine sulfoxide reductase MsrA/MsrB (309 aa).

The segment at 1-153 (MIYLAGGCFW…PNGYCHIDIN (153 aa)) is peptide methionine sulfoxide reductase A. C8 is an active-site residue. Residues 170-293 (ATEIKEKLSA…NSLSITFIPK (124 aa)) enclose the MsrB domain. C282 (nucleophile) is an active-site residue.

This sequence in the N-terminal section; belongs to the MsrA Met sulfoxide reductase family. The protein in the C-terminal section; belongs to the MsrB Met sulfoxide reductase family.

It catalyses the reaction L-methionyl-[protein] + [thioredoxin]-disulfide + H2O = L-methionyl-(S)-S-oxide-[protein] + [thioredoxin]-dithiol. It carries out the reaction [thioredoxin]-disulfide + L-methionine + H2O = L-methionine (S)-S-oxide + [thioredoxin]-dithiol. The enzyme catalyses L-methionyl-[protein] + [thioredoxin]-disulfide + H2O = L-methionyl-(R)-S-oxide-[protein] + [thioredoxin]-dithiol. In terms of biological role, has an important function as a repair enzyme for proteins that have been inactivated by oxidation. Catalyzes the reversible oxidation-reduction of methionine sulfoxide in proteins to methionine. In Streptococcus pyogenes serotype M1, this protein is Peptide methionine sulfoxide reductase MsrA/MsrB (msrAB).